The chain runs to 451 residues: Exodeoxyribonuclease 7 large subunit (451 aa).

Belongs to the XseA family. Heterooligomer composed of large and small subunits.

Its subcellular location is the cytoplasm. It catalyses the reaction Exonucleolytic cleavage in either 5'- to 3'- or 3'- to 5'-direction to yield nucleoside 5'-phosphates.. Its function is as follows. Bidirectionally degrades single-stranded DNA into large acid-insoluble oligonucleotides, which are then degraded further into small acid-soluble oligonucleotides. The protein is Exodeoxyribonuclease 7 large subunit of Bacillus cytotoxicus (strain DSM 22905 / CIP 110041 / 391-98 / NVH 391-98).